Consider the following 219-residue polypeptide: Lipid transferase CIDEB (219 aa).

T18 bears the Phosphothreonine mark. The CIDE-N domain maps to 34–110 (PQRPFRVCDH…VLEQGQSWSP (77 aa)).

This sequence belongs to the CIDE family. As to quaternary structure, interacts with DFFA. Interacts with DFFB; inhibited by DFFB. Interacts with APOB. Interacts with PREB/SEC12; facilitating loading of SCAP-SREBP into COPII vesicles. Highly enriched in the liver.

Its subcellular location is the lipid droplet. It is found in the endoplasmic reticulum membrane. It localises to the golgi apparatus. The protein localises to the cytoplasmic vesicle. The protein resides in the COPI-coated vesicle. Its function is as follows. Lipid transferase specifically expressed in hepatocytes, which promotes unilocular lipid droplet formation by mediating lipid droplet fusion. Lipid droplet fusion promotes their enlargement, restricting lipolysis and favoring lipid storage. Localizes on the lipid droplet surface, at focal contact sites between lipid droplets, and mediates atypical lipid droplet fusion by promoting directional net neutral lipid transfer from the smaller to larger lipid droplets. The transfer direction may be driven by the internal pressure difference between the contacting lipid droplet pair. Promotes lipid exchange and lipid droplet fusion in both small and large lipid droplet-containing hepatocytes. In addition to its role in lipid droplet fusion, also involved in cytoplasmic vesicle biogenesis and transport. Required for very-low-density lipoprotein (VLDL) lipidation and maturation. Probably involved in the biogenesis of VLDL transport vesicles by forming a COPII vesicle coat and facilitating the formation of endoplasmic reticulum-derived large vesicles. Also involved in sterol-regulated export of the SCAP-SREBP complex, composed of SCAP, SREBF1/SREBP1 and SREBF2/SREBP2, by promoting loading of SCAP-SREBP into COPII vesicles. May also activate apoptosis. The chain is Lipid transferase CIDEB from Mus musculus (Mouse).